A 218-amino-acid chain; its full sequence is Ribosomal RNA large subunit methyltransferase E (218 aa).

5 residues coordinate S-adenosyl-L-methionine: Gly-64, Trp-66, Asp-92, Asp-108, and Asp-133. The active-site Proton acceptor is Lys-173.

It belongs to the class I-like SAM-binding methyltransferase superfamily. RNA methyltransferase RlmE family.

It localises to the cytoplasm. It carries out the reaction uridine(2552) in 23S rRNA + S-adenosyl-L-methionine = 2'-O-methyluridine(2552) in 23S rRNA + S-adenosyl-L-homocysteine + H(+). Functionally, specifically methylates the uridine in position 2552 of 23S rRNA at the 2'-O position of the ribose in the fully assembled 50S ribosomal subunit. The chain is Ribosomal RNA large subunit methyltransferase E from Paracidovorax citrulli (strain AAC00-1) (Acidovorax citrulli).